The primary structure comprises 120 residues: NAD(P)H-quinone oxidoreductase subunit 3, chloroplastic (120 aa).

The next 3 helical transmembrane spans lie at 9-29, 64-84, and 88-108; these read IFWA…FVSG, MFAL…PWAM, and VLGI…IVGL.

It belongs to the complex I subunit 3 family. In terms of assembly, NDH is composed of at least 16 different subunits, 5 of which are encoded in the nucleus.

The protein localises to the plastid. The protein resides in the chloroplast thylakoid membrane. It carries out the reaction a plastoquinone + NADH + (n+1) H(+)(in) = a plastoquinol + NAD(+) + n H(+)(out). It catalyses the reaction a plastoquinone + NADPH + (n+1) H(+)(in) = a plastoquinol + NADP(+) + n H(+)(out). NDH shuttles electrons from NAD(P)H:plastoquinone, via FMN and iron-sulfur (Fe-S) centers, to quinones in the photosynthetic chain and possibly in a chloroplast respiratory chain. The immediate electron acceptor for the enzyme in this species is believed to be plastoquinone. Couples the redox reaction to proton translocation, and thus conserves the redox energy in a proton gradient. This is NAD(P)H-quinone oxidoreductase subunit 3, chloroplastic from Daucus carota (Wild carrot).